The primary structure comprises 232 residues: Multiple organellar RNA editing factor 6, mitochondrial (232 aa).

Residues 1 to 67 (MAKTLSRSTA…TIRTRMDRSG (67 aa)) constitute a mitochondrion transit peptide. Residues 208 to 232 (TNQRGSDKPKYHDRIRNVRRRENMR) form a disordered region. Over residues 212–232 (GSDKPKYHDRIRNVRRRENMR) the composition is skewed to basic and acidic residues.

This sequence belongs to the MORF family. As to quaternary structure, heterodimers with MORF8/RIP1, MORF3/RIP3, MORF6/RIP6, MORF7/RIP7 and MORF9/RIP9.

Its subcellular location is the mitochondrion. Its function is as follows. Involved in organellar RNA editing. Required for the processing of few RNA editing sites in mitochondria. The protein is Multiple organellar RNA editing factor 6, mitochondrial of Arabidopsis thaliana (Mouse-ear cress).